Reading from the N-terminus, the 392-residue chain is uncharacterized protein (392 aa).

This sequence belongs to the hcp1 family.

This is an uncharacterized protein from Escherichia coli (strain K12).